The chain runs to 431 residues: FAD-dependent monooxygenase nodY1 (431 aa).

The signal sequence occupies residues 1-21 (MASTGVSVIVVGLGLAGLTTA). FAD is bound by residues Glu35 and Arg110. The active site involves Arg188. Asp313 contacts FAD.

The protein belongs to the paxM FAD-dependent monooxygenase family. Requires FAD as cofactor.

It functions in the pathway secondary metabolite biosynthesis. FAD-dependent monooxygenase; part of the gene cluster that mediates the biosynthesis of the indole diterpenes nodulisporic acids (NA). Nodulisporic acid A (NAA) and its chemically modified derivatives are of particular significance because of their highly potent insecticidal activity against blood-feeding arthropods and lack of observable adverse effects on mammals, in particular the tremogenicity associated with the paspaline-derived IDTs is not observed. The geranylgeranyl diphosphate (GGPP) synthase ggs1, localized outside of the cluster, is proposed to catalyze the first step in nodulisporic acid biosynthesis via conversion of farnesyl pyrophosphate and isopentyl pyrophosphate into geranylgeranyl pyrophosphate (GGPP). Condensation of indole-3-glycerol phosphate with GGPP by the prenyl transferase nodC then forms 3-geranylgeranylindole (3-GGI). Epoxidation by the FAD-dependent monooxygenase nodM leads to a single-epoxidized-GGI that is substrate of the terpene cyclase nodB for cyclization to yield emindole SB. The terminal methyl carbon, C28, of emindole SB is then oxidized by the cytochrome P450 monooxygenase nodW to produce nodulisporic acid F (NAF), the pentacyclic core of NAA. NAF is converted to nodulisporic acid E (NAE) via prenylation. This step is probably performed by one of the indole diterpene prenyltransferases nodD1 or nodD2. Several oxidation steps performed by the FAD-linked oxidoreductase nodO and one of the cytochrome P450 monooxygenase nodR, nodX or nodZ further convert NAE to nodulisporic acid D (NAD). NAD is substrate of cytochrome P450 monooxygenase nodJ to produce the precursor of nodulisporic acid C (NAC), converted to NAC by one of the indole diterpene prenyltransferases nodD1 or nodD2. The FAD-dependent monooxygenase nodY2 then oxidizes NAC to nodulisporic acid B (NAB). Finally NAB is converted to NAA by one of the cytochrome P450 monooxygenases nodR, nodX or nodZ. The chain is FAD-dependent monooxygenase nodY1 from Hypoxylon pulicicidum.